The chain runs to 199 residues: Nucleoside triphosphate pyrophosphatase (199 aa).

The Proton acceptor role is filled by Asp-76.

It belongs to the Maf family. A divalent metal cation is required as a cofactor.

Its subcellular location is the cytoplasm. The enzyme catalyses a ribonucleoside 5'-triphosphate + H2O = a ribonucleoside 5'-phosphate + diphosphate + H(+). It carries out the reaction a 2'-deoxyribonucleoside 5'-triphosphate + H2O = a 2'-deoxyribonucleoside 5'-phosphate + diphosphate + H(+). Nucleoside triphosphate pyrophosphatase. May have a dual role in cell division arrest and in preventing the incorporation of modified nucleotides into cellular nucleic acids. The polypeptide is Nucleoside triphosphate pyrophosphatase (Ruegeria sp. (strain TM1040) (Silicibacter sp.)).